A 184-amino-acid chain; its full sequence is NADH-quinone oxidoreductase subunit B (184 aa).

[4Fe-4S] cluster contacts are provided by cysteine 37, cysteine 38, cysteine 103, and cysteine 132.

It belongs to the complex I 20 kDa subunit family. In terms of assembly, NDH-1 is composed of 14 different subunits. Subunits NuoB, C, D, E, F, and G constitute the peripheral sector of the complex. [4Fe-4S] cluster serves as cofactor.

It localises to the cell membrane. It carries out the reaction a quinone + NADH + 5 H(+)(in) = a quinol + NAD(+) + 4 H(+)(out). Its function is as follows. NDH-1 shuttles electrons from NADH, via FMN and iron-sulfur (Fe-S) centers, to quinones in the respiratory chain. The immediate electron acceptor for the enzyme in this species is believed to be a menaquinone. Couples the redox reaction to proton translocation (for every two electrons transferred, four hydrogen ions are translocated across the cytoplasmic membrane), and thus conserves the redox energy in a proton gradient. The protein is NADH-quinone oxidoreductase subunit B of Mycobacteroides abscessus (strain ATCC 19977 / DSM 44196 / CCUG 20993 / CIP 104536 / JCM 13569 / NCTC 13031 / TMC 1543 / L948) (Mycobacterium abscessus).